We begin with the raw amino-acid sequence, 391 residues long: Cytochrome b (391 aa).

The next 4 membrane-spanning stretches (helical) occupy residues 33–53 (FGSLLSLCLALQILTGLFLAM), 77–98 (WLIRSIHANGASFFFICIYLHI), 113–133 (WSAGVILLLLVMMTAFVGYVL), and 178–198 (FFAFHFLFPFGIIAMTLVHLL). His-83 and His-97 together coordinate heme b. Heme b contacts are provided by His-182 and His-196. Position 201 (His-201) interacts with a ubiquinone. 4 helical membrane-spanning segments follow: residues 226–246 (YKDLIGFAWFALFLITLVLFI), 288–308 (LGGVFALLASILILLIVPILH), 320–340 (LAQIFMGLLVVDVAILTWIGG), and 347–367 (FIIIGQIASFLYFFLFLVFFP).

Belongs to the cytochrome b family. The cytochrome bc1 complex contains 3 respiratory subunits (MT-CYB, CYC1 and UQCRFS1), 2 core proteins (UQCRC1 and UQCRC2) and probably 6 low-molecular weight proteins. It depends on heme b as a cofactor.

It localises to the mitochondrion inner membrane. Functionally, component of the ubiquinol-cytochrome c reductase complex (complex III or cytochrome b-c1 complex) that is part of the mitochondrial respiratory chain. The b-c1 complex mediates electron transfer from ubiquinol to cytochrome c. Contributes to the generation of a proton gradient across the mitochondrial membrane that is then used for ATP synthesis. The polypeptide is Cytochrome b (mt-cyb) (Kryptolebias marmoratus (Mangrove killifish)).